Reading from the N-terminus, the 418-residue chain is Histidinol dehydrogenase (418 aa).

NAD(+)-binding residues include tyrosine 119, glutamine 180, and asparagine 203. Substrate is bound by residues threonine 226, glutamine 248, and histidine 251. Residues glutamine 248 and histidine 251 each coordinate Zn(2+). Residues glutamate 316 and histidine 317 each act as proton acceptor in the active site. Histidine 317, aspartate 350, glutamate 404, and histidine 409 together coordinate substrate. Aspartate 350 lines the Zn(2+) pocket. Residue histidine 409 coordinates Zn(2+).

The protein belongs to the histidinol dehydrogenase family. Requires Zn(2+) as cofactor.

The catalysed reaction is L-histidinol + 2 NAD(+) + H2O = L-histidine + 2 NADH + 3 H(+). It participates in amino-acid biosynthesis; L-histidine biosynthesis; L-histidine from 5-phospho-alpha-D-ribose 1-diphosphate: step 9/9. Functionally, catalyzes the sequential NAD-dependent oxidations of L-histidinol to L-histidinaldehyde and then to L-histidine. The chain is Histidinol dehydrogenase from Staphylococcus aureus (strain MRSA252).